The primary structure comprises 218 residues: Capsid protein (218 aa).

Met-1 carries the post-translational modification N-acetylmethionine; by host. A compositionally biased stretch (low complexity) spans Met-1–Gly-10. The interval Met-1–Ala-30 is disordered. The span at Arg-11–Ser-21 shows a compositional bias: basic residues.

The protein belongs to the cucumovirus capsid protein family.

The protein localises to the virion. Its function is as follows. Capsid protein. Probably binds RNA and plays a role in packaging. This is Capsid protein from Cucumber mosaic virus (strain Y) (CMV).